The sequence spans 471 residues: Vitellogenic carboxypeptidase (471 aa).

The N-terminal stretch at 1–19 (MVKFHLLVLIAFTCYTCSD) is a signal peptide. Asn135 is a glycosylation site (N-linked (GlcNAc...) asparagine). Residues Ser207, Asp391, and His448 contribute to the active site.

It belongs to the peptidase S10 family. As to expression, synthesized in the fat body of vitellogenic females, secreted into the hemolymph and accumulates in yolk bodies of developing oocytes.

It is found in the secreted. Functionally, may play a role in activating hydrolytic enzymes that are involved in the degradation of yolk proteins in developing embryos or may function as an exopeptidase in the degradation of vitellogenin. The sequence is that of Vitellogenic carboxypeptidase (VCP) from Aedes aegypti (Yellowfever mosquito).